The chain runs to 521 residues: Protein PLM2 (521 aa).

The disordered stretch occupies residues 1 to 63; that stretch reads MSHLFPPSSP…SIGRQSSPVK (63 aa). Polar residues predominate over residues 51 to 63; it reads PSSSIGRQSSPVK. The 55-residue stretch at 102–156 folds into the FHA domain; sequence LAIGRKKSVCNIILPCRKNISRQHAFISYAADRNEIKLECNGTNGLSVHLPYSMQ. Residues S281, S295, S302, and S384 each carry the phosphoserine modification.

It belongs to the PLM2/TOS4 family. Phosphorylated by CDC28.

The protein localises to the nucleus. In terms of biological role, binds to the promoters of genes with functions important for the G1/S (start) transition; primarily genes involved in DNA synthesis and repair, chromosome segregation, nuclear division and transcription. This chain is Protein PLM2 (PLM2), found in Saccharomyces cerevisiae (strain ATCC 204508 / S288c) (Baker's yeast).